The sequence spans 4328 residues: Cadherin-4 (4328 aa).

The signal sequence occupies residues 1-23 (MKKHRVFHLFLLIFCKAISLVTT). Residues 24 to 4072 (SSSTEQIFEF…TVLEFLLKAE (4049 aa)) lie on the Extracellular side of the membrane. N-linked (GlcNAc...) asparagine glycans are attached at residues Asn39 and Asn56. 2 consecutive Cadherin domains span residues 108 to 153 (PLNR…SPVF) and 156 to 275 (GEQG…NPNI). Residues Asn196, Asn330, Asn339, Asn365, Asn431, Asn452, and Asn584 are each glycosylated (N-linked (GlcNAc...) asparagine). 11 Cadherin domains span residues 384–492 (DNEK…APVF), 507–608 (PGDV…SPVF), 609–720 (SSFP…SPQF), 721–826 (DEVS…PPKC), 827–934 (VVQH…AIEF), 935–1051 (DDVA…KPMY), 1047–1156 (KKPM…SPTF), 1175–1262 (RIFA…PPEI), 1265–1363 (KKSD…RPKF), 1364–1467 (SASH…SPYF), and 1476–1570 (VDES…APET). N-linked (GlcNAc...) asparagine glycans are attached at residues Asn811 and Asn899. Residues 1090–1092 (RGD) carry the Cell attachment site motif. An N-linked (GlcNAc...) asparagine glycan is attached at Asn1192. A disordered region spans residues 1246 to 1267 (NSAGQKPRKSKNSPPEISGKKS). Asn1335 carries N-linked (GlcNAc...) asparagine glycosylation. N-linked (GlcNAc...) asparagine glycosylation is present at Asn1610. Positions 1671-1784 (RRQVYRGTIR…IDENDEPPRF (114 aa)) constitute a Cadherin 14 domain. An N-linked (GlcNAc...) asparagine glycan is attached at Asn1895. A Cadherin 15 domain is found at 1917–1984 (FSIVNPHEAF…ENINDETPIF (68 aa)). Asn2059, Asn2150, Asn2216, Asn2367, Asn2413, Asn2440, and Asn2535 each carry an N-linked (GlcNAc...) asparagine glycan. Cadherin domains lie at 2187 to 2285 (EKLK…MPEF) and 2286 to 2397 (IRSD…PPRF). Cadherin domains follow at residues 2429–2505 (LQFS…PPFF), 2506–2608 (VLPF…VPRF), 2609–2712 (SNSH…APAF), 2719–2813 (FTIS…PPQF), 2828–2915 (SPIL…CPEA), 2913–3011 (PEAN…RPKI), 3012–3113 (IEKL…APTF), 3114–3216 (EKST…APKF), and 3217–3326 (EKEK…APTF). N-linked (GlcNAc...) asparagine glycans are attached at residues Asn2844, Asn2916, Asn2941, Asn3083, and Asn3143. N-linked (GlcNAc...) asparagine glycosylation is present at Asn3330. Cadherin domains lie at 3335 to 3428 (VQEG…APTM) and 3429 to 3554 (KPMK…VDEF). N-linked (GlcNAc...) asparagine glycosylation is present at Asn3512. An EGF-like 1 domain is found at 3706-3744 (ETNQCAKSPCEQWQLCIPSVHNSTYECVCPLGMEGDKCS). 10 disulfides stabilise this stretch: Cys3710/Cys3721, Cys3715/Cys3732, Cys3734/Cys3743, Cys3898/Cys3925, Cys3933/Cys3944, Cys3938/Cys3954, Cys3956/Cys3965, Cys3972/Cys3983, Cys3977/Cys3992, and Cys3994/Cys4003. Asn3727 carries N-linked (GlcNAc...) asparagine glycosylation. Positions 3757–3925 (EAELSVGGDG…MKLFGAQPGC (169 aa)) constitute a Laminin G-like domain. 2 consecutive EGF-like domains span residues 3929-3966 (TSSP…NVCE) and 3968-4004 (DLEP…KHCE). The N-linked (GlcNAc...) asparagine glycan is linked to Asn4043. The chain crosses the membrane as a helical span at residues 4073-4093 (IVIVILGVLLLLLVFCLTFIT). The Cytoplasmic portion of the chain corresponds to 4094 to 4328 (WKCCKKNRDP…IDEEVNIHIS (235 aa)). Disordered regions lie at residues 4143–4215 (TSSV…SSLR) and 4268–4311 (NFER…PISL). Residues 4178-4196 (TRRDPLPSDKFRRVDETAN) are compositionally biased toward basic and acidic residues. Positions 4207–4209 (RGD) match the Cell attachment site motif.

As to expression, in larvae and adult, it is expressed in various tissues including pharyngeal muscle, hypodermis and gonad. In the nervous system it is expressed in sensory neurons and motor neurons in the ventral cord.

Its subcellular location is the cell membrane. Potential calcium-dependent cell-adhesion protein that controls axon guidance in the ventral cord. This Caenorhabditis elegans protein is Cadherin-4.